The primary structure comprises 177 residues: R-phycoerythrin beta chain (177 aa).

2 residues coordinate phycourobilin: Cys50 and Cys61. Asn72 is subject to N4-methylasparagine. Cys82 and Cys158 together coordinate (2R,3E)-phycoerythrobilin.

The protein belongs to the phycobiliprotein family. As to quaternary structure, heterodimer of an alpha and a beta chain. In terms of processing, contains two covalently linked phycoerythrobilin chromophores and one covalently linked phycourobilin chromophore.

The protein resides in the plastid. Its subcellular location is the chloroplast thylakoid membrane. In terms of biological role, light-harvesting photosynthetic bile pigment-protein from the phycobiliprotein complex. The sequence is that of R-phycoerythrin beta chain (cpeB) from Lophosiphonia boldii (Red alga).